A 123-amino-acid polypeptide reads, in one-letter code: UPF0102 protein MCA0184 (123 aa).

Belongs to the UPF0102 family.

This is UPF0102 protein MCA0184 from Methylococcus capsulatus (strain ATCC 33009 / NCIMB 11132 / Bath).